Consider the following 307-residue polypeptide: Deaminated glutathione amidase, chloroplastic/cytosolic (307 aa).

The N-terminal 36 residues, 1 to 36, are a transit peptide targeting the chloroplast; that stretch reads MNAYSVSLDFTKPSLFTRITLSSQIPLTMATTVNKT. The region spanning 37 to 286 is the CN hydrolase domain; the sequence is VRVAAAQMTS…TGIVVADIDF (250 aa). Residue E76 is the Proton acceptor of the active site. Residue K147 is the Proton donor of the active site. C188 serves as the catalytic Nucleophile.

It belongs to the nitrilase superfamily. NIT1/NIT2 family.

It is found in the plastid. The protein resides in the chloroplast. The protein localises to the cytoplasm. It carries out the reaction N-(4-oxoglutaryl)-L-cysteinylglycine + H2O = L-cysteinylglycine + 2-oxoglutarate. It catalyses the reaction N-(4-carboxy-4-oxobutanoyl)-L-ethylglycylglycine + H2O = N-(2-aminobutanoyl)glycine + 2-oxoglutarate. Its function is as follows. Catalyzes the hydrolysis of the amide bond in N-(4-oxoglutarate)-L-cysteinylglycine (deaminated glutathione), a metabolite repair reaction to dispose of the harmful deaminated glutathione. Possesses amidase activity toward deaminated ophthalmate in vitro. The sequence is that of Deaminated glutathione amidase, chloroplastic/cytosolic from Arabidopsis thaliana (Mouse-ear cress).